A 385-amino-acid chain; its full sequence is Putative ESX-1 scaffolding and assembly protein SaeC (385 aa).

The protein localises to the cytoplasm. Functionally, may be involved in assembly of the ESX-1 / type VII specialized secretion system (T7SS), which exports several proteins including EsxA and EsxB. Involved in DNA conjugation in recipient (MKD8) strain. The polypeptide is Putative ESX-1 scaffolding and assembly protein SaeC (Mycolicibacterium smegmatis (strain ATCC 700084 / mc(2)155) (Mycobacterium smegmatis)).